Here is a 744-residue protein sequence, read N- to C-terminus: 1,4-alpha-glucan branching enzyme GlgB (744 aa).

Asp-415 acts as the Nucleophile in catalysis. The Proton donor role is filled by Glu-468.

Belongs to the glycosyl hydrolase 13 family. GlgB subfamily. As to quaternary structure, monomer.

It carries out the reaction Transfers a segment of a (1-&gt;4)-alpha-D-glucan chain to a primary hydroxy group in a similar glucan chain.. The protein operates within glycan biosynthesis; glycogen biosynthesis. Its function is as follows. Catalyzes the formation of the alpha-1,6-glucosidic linkages in glycogen by scission of a 1,4-alpha-linked oligosaccharide from growing alpha-1,4-glucan chains and the subsequent attachment of the oligosaccharide to the alpha-1,6 position. The protein is 1,4-alpha-glucan branching enzyme GlgB of Shewanella frigidimarina (strain NCIMB 400).